We begin with the raw amino-acid sequence, 264 residues long: Putative hydro-lyase RBAM_004300 (264 aa).

Belongs to the D-glutamate cyclase family.

The protein is Putative hydro-lyase RBAM_004300 of Bacillus velezensis (strain DSM 23117 / BGSC 10A6 / LMG 26770 / FZB42) (Bacillus amyloliquefaciens subsp. plantarum).